Consider the following 368-residue polypeptide: G-protein coupled receptor 183-A (368 aa).

Residues 1–27 are Extracellular-facing; it reads METTSANFTQNDSNVCTNLYNHRGWAQ. Asn-7 and Asn-11 each carry an N-linked (GlcNAc...) asparagine glycan. The helical transmembrane segment at 28–53 threads the bilayer; the sequence is YFLPAMYSLICIVGLLGNVLALHVIW. Residues 54–73 lie on the Cytoplasmic side of the membrane; the sequence is PNLKKINSTTLYSANLVVSD. A helical transmembrane segment spans residues 74-91; it reads ILFSLALPLRVVYYARGF. The Extracellular segment spans residues 92-101; it reads DWPMGEGLCK. A disulfide bond links Cys-100 and Cys-178. The chain crosses the membrane as a helical span at residues 102-123; it reads AVALLFYINMYAGVNFMTCLSV. Topologically, residues 124–145 are cytoplasmic; that stretch reads DRFIAVVLPLRFSRFRKVQKVR. The chain crosses the membrane as a helical span at residues 146–164; the sequence is YICGVVWVVVLMQTLPLLS. Residues 165–189 lie on the Extracellular side of the membrane; the sequence is MPMTNIEQSGHITCMEYPNFEKIDN. A helical transmembrane segment spans residues 190 to 212; the sequence is LPVMLIGAVVLGFGIPVITILVC. The Cytoplasmic segment spans residues 213-238; the sequence is YTALCLKLRHLAKSNKLTEKSGRSSK. Residues 239–262 traverse the membrane as a helical segment; that stretch reads AIGVICTVILVFVVCYSPYHVDLL. The Extracellular portion of the chain corresponds to 263–282; it reads QYMIKKLRYDPDCSELHKFQ. The chain crosses the membrane as a helical span at residues 283–307; it reads ISLHITVCFMNLNSCLDPFIYFFAC. The Cytoplasmic segment spans residues 308 to 368; that stretch reads KGYKKKVLKL…SSVLLNSLEQ (61 aa).

Belongs to the G-protein coupled receptor 1 family.

Its subcellular location is the cell membrane. Functionally, G-protein coupled receptor expressed in lymphocytes that acts as a chemotactic receptor for B-cells, T-cells, splenic dendritic cells, monocytes/macrophages and astrocytes. Receptor for oxysterol 7-alpha,25-dihydroxycholesterol (7-alpha,25-OHC) and other related oxysterols. Mediates cell positioning and movement of a number of cells by binding the 7-alpha,25-OHC ligand that forms a chemotactic gradient. Binding of 7-alpha,25-OHC mediates the correct localization of B-cells during humoral immune responses. The polypeptide is G-protein coupled receptor 183-A (gpr183a) (Danio rerio (Zebrafish)).